The following is a 282-amino-acid chain: 4-hydroxy-tetrahydrodipicolinate reductase (282 aa).

Residues 14 to 19 (GAMGRM) and 115 to 117 (GTT) contribute to the NAD(+) site. Catalysis depends on H171, which acts as the Proton donor/acceptor. Residue H172 participates in (S)-2,3,4,5-tetrahydrodipicolinate binding. The active-site Proton donor is K175. 181–182 (GT) is a (S)-2,3,4,5-tetrahydrodipicolinate binding site.

This sequence belongs to the DapB family.

The protein resides in the cytoplasm. The catalysed reaction is (S)-2,3,4,5-tetrahydrodipicolinate + NAD(+) + H2O = (2S,4S)-4-hydroxy-2,3,4,5-tetrahydrodipicolinate + NADH + H(+). It carries out the reaction (S)-2,3,4,5-tetrahydrodipicolinate + NADP(+) + H2O = (2S,4S)-4-hydroxy-2,3,4,5-tetrahydrodipicolinate + NADPH + H(+). The protein operates within amino-acid biosynthesis; L-lysine biosynthesis via DAP pathway; (S)-tetrahydrodipicolinate from L-aspartate: step 4/4. Its function is as follows. Catalyzes the conversion of 4-hydroxy-tetrahydrodipicolinate (HTPA) to tetrahydrodipicolinate. The polypeptide is 4-hydroxy-tetrahydrodipicolinate reductase (Prochlorococcus marinus (strain NATL2A)).